A 495-amino-acid polypeptide reads, in one-letter code: Phenylalanine--tRNA ligase alpha subunit (495 aa).

Residues threonine 338, 377-379 (QLE), and tyrosine 417 contribute to the L-phenylalanine site. Glutamate 419 provides a ligand contact to Mg(2+). Phenylalanine 442 contacts L-phenylalanine.

It belongs to the class-II aminoacyl-tRNA synthetase family. Phe-tRNA synthetase alpha subunit type 2 subfamily. In terms of assembly, tetramer of two alpha and two beta subunits. Requires Mg(2+) as cofactor.

The protein localises to the cytoplasm. It carries out the reaction tRNA(Phe) + L-phenylalanine + ATP = L-phenylalanyl-tRNA(Phe) + AMP + diphosphate + H(+). In Methanosarcina mazei (strain ATCC BAA-159 / DSM 3647 / Goe1 / Go1 / JCM 11833 / OCM 88) (Methanosarcina frisia), this protein is Phenylalanine--tRNA ligase alpha subunit.